Reading from the N-terminus, the 204-residue chain is Endothelin-3 (204 aa).

The first 17 residues, 1 to 17 (MELRLWFLFGLTVTSAA), serve as a signal peptide directing secretion. Positions 18 to 71 (GPVPRPQPGDAGRSGVPRAPSATKETMAMVATRGPSPRSSGQEQEPGPFGELAA) are disordered. The propeptide occupies 18-80 (GPVPRPQPGD…AKGGPVRYRA (63 aa)). 2 cysteine pairs are disulfide-bonded: Cys83-Cys97 and Cys85-Cys93. Positions 104 to 204 (INTPERTVPY…KSRTDKARRL (101 aa)) are excised as a propeptide. The interval 115 to 140 (LSNHRGSVRGRRSAGPSPQSSQPSRG) is disordered. Over residues 127–140 (SAGPSPQSSQPSRG) the composition is skewed to low complexity. The segment at 144–158 (CACAESQDRACVYFC) is endothelin-like. Positions 166–204 (GASRTPETPDKEAGKPAGRATGGLHPRRLKSRTDKARRL) are disordered.

This sequence belongs to the endothelin/sarafotoxin family.

The protein localises to the secreted. Functionally, endothelins are endothelium-derived vasoconstrictor peptides. The polypeptide is Endothelin-3 (EDN3) (Sus scrofa (Pig)).